A 243-amino-acid chain; its full sequence is Uroporphyrinogen-III C-methyltransferase (243 aa).

S-adenosyl-L-homocysteine is bound by residues P12, 88–90 (SGD), 118–119 (ST), M166, and A195.

This sequence belongs to the precorrin methyltransferase family.

The catalysed reaction is uroporphyrinogen III + 2 S-adenosyl-L-methionine = precorrin-2 + 2 S-adenosyl-L-homocysteine + H(+). It participates in cofactor biosynthesis; adenosylcobalamin biosynthesis; precorrin-2 from uroporphyrinogen III: step 1/1. It functions in the pathway porphyrin-containing compound metabolism; siroheme biosynthesis; precorrin-2 from uroporphyrinogen III: step 1/1. Catalyzes the two successive C-2 and C-7 methylation reactions involved in the conversion of uroporphyrinogen III to precorrin-2 via the intermediate formation of precorrin-1. It is a step in the biosynthesis of both cobalamin (vitamin B12) and siroheme. The protein is Uroporphyrinogen-III C-methyltransferase of Synechococcus elongatus (strain ATCC 33912 / PCC 7942 / FACHB-805) (Anacystis nidulans R2).